A 68-amino-acid chain; its full sequence is MKLHNRVTVKTDGGPRREGTILAVEEFSEGVMYLVSLDDYPTGIWFFNELSSPDGIFVEPVVGETQAK.

It belongs to the DsrB family.

The polypeptide is Protein DsrB (Sodalis glossinidius (strain morsitans)).